An 80-amino-acid chain; its full sequence is Exodeoxyribonuclease 7 small subunit (80 aa).

The interval 60-80 (LIDSDGTEHNLDPNNASAPEE) is disordered. Basic and acidic residues predominate over residues 61–70 (IDSDGTEHNL). Polar residues predominate over residues 71–80 (DPNNASAPEE).

This sequence belongs to the XseB family. Heterooligomer composed of large and small subunits.

The protein localises to the cytoplasm. It catalyses the reaction Exonucleolytic cleavage in either 5'- to 3'- or 3'- to 5'-direction to yield nucleoside 5'-phosphates.. Functionally, bidirectionally degrades single-stranded DNA into large acid-insoluble oligonucleotides, which are then degraded further into small acid-soluble oligonucleotides. The polypeptide is Exodeoxyribonuclease 7 small subunit (Lactobacillus acidophilus (strain ATCC 700396 / NCK56 / N2 / NCFM)).